A 90-amino-acid polypeptide reads, in one-letter code: Probable Fe(2+)-trafficking protein (90 aa).

The protein belongs to the Fe(2+)-trafficking protein family.

Could be a mediator in iron transactions between iron acquisition and iron-requiring processes, such as synthesis and/or repair of Fe-S clusters in biosynthetic enzymes. In Pseudoalteromonas atlantica (strain T6c / ATCC BAA-1087), this protein is Probable Fe(2+)-trafficking protein.